A 251-amino-acid chain; its full sequence is Imidazole glycerol phosphate synthase subunit HisF (251 aa).

Residues D12 and D131 contribute to the active site.

The protein belongs to the HisA/HisF family. In terms of assembly, heterodimer of HisH and HisF.

The protein resides in the cytoplasm. It carries out the reaction 5-[(5-phospho-1-deoxy-D-ribulos-1-ylimino)methylamino]-1-(5-phospho-beta-D-ribosyl)imidazole-4-carboxamide + L-glutamine = D-erythro-1-(imidazol-4-yl)glycerol 3-phosphate + 5-amino-1-(5-phospho-beta-D-ribosyl)imidazole-4-carboxamide + L-glutamate + H(+). It participates in amino-acid biosynthesis; L-histidine biosynthesis; L-histidine from 5-phospho-alpha-D-ribose 1-diphosphate: step 5/9. Functionally, IGPS catalyzes the conversion of PRFAR and glutamine to IGP, AICAR and glutamate. The HisF subunit catalyzes the cyclization activity that produces IGP and AICAR from PRFAR using the ammonia provided by the HisH subunit. The chain is Imidazole glycerol phosphate synthase subunit HisF from Helicobacter hepaticus (strain ATCC 51449 / 3B1).